Here is a 381-residue protein sequence, read N- to C-terminus: Chaperone protein DnaJ (381 aa).

Residues 3 to 66 (DYYETLGVER…DKRRMYDSGV (64 aa)) enclose the J domain. Residues 129–211 (GGTAHVKINT…CMGHGRVRTT (83 aa)) form a CR-type zinc finger. 8 residues coordinate Zn(2+): Cys142, Cys145, Cys159, Cys162, Cys185, Cys188, Cys199, and Cys202. 4 CXXCXGXG motif repeats span residues 142 to 149 (CQECGGSG), 159 to 166 (CPDCHGQG), 185 to 192 (CERCEGHG), and 199 to 206 (CPSCMGHG). The disordered stretch occupies residues 355–381 (ATHVSQASRPQAGQKKGFFSKLKDALS). The segment covering 356 to 365 (THVSQASRPQ) has biased composition (polar residues).

This sequence belongs to the DnaJ family. As to quaternary structure, homodimer. Zn(2+) is required as a cofactor.

It localises to the cytoplasm. Functionally, participates actively in the response to hyperosmotic and heat shock by preventing the aggregation of stress-denatured proteins and by disaggregating proteins, also in an autonomous, DnaK-independent fashion. Unfolded proteins bind initially to DnaJ; upon interaction with the DnaJ-bound protein, DnaK hydrolyzes its bound ATP, resulting in the formation of a stable complex. GrpE releases ADP from DnaK; ATP binding to DnaK triggers the release of the substrate protein, thus completing the reaction cycle. Several rounds of ATP-dependent interactions between DnaJ, DnaK and GrpE are required for fully efficient folding. Also involved, together with DnaK and GrpE, in the DNA replication of plasmids through activation of initiation proteins. This is Chaperone protein DnaJ from Bifidobacterium longum (strain NCC 2705).